Reading from the N-terminus, the 168-residue chain is MVEDILAPGLRVVFCGINPGLSSAGTGFPFAHPANRFWKVIYQAGFTDHQLKPQEAQHLLDYRCGVTKLVDRPTVQANEISKQELHAGGRKLIEKIEDYQPQALAILGKQAYEQGFSQRGAQWGKQTLSIGSTQIWVLPNPSGLSRVSLEKLVEAYRELDQALVVRGR.

Belongs to the uracil-DNA glycosylase (UDG) superfamily. TDG/mug family. Binds DNA as a monomer.

It localises to the cytoplasm. The catalysed reaction is Specifically hydrolyzes mismatched double-stranded DNA and polynucleotides, releasing free uracil.. Excises ethenocytosine and uracil, which can arise by alkylation or deamination of cytosine, respectively, from the corresponding mispairs with guanine in ds-DNA. It is capable of hydrolyzing the carbon-nitrogen bond between the sugar-phosphate backbone of the DNA and the mispaired base. The complementary strand guanine functions in substrate recognition. Required for DNA damage lesion repair in stationary-phase cells. The chain is G/U mismatch-specific DNA glycosylase from Escherichia coli O157:H7 (strain EC4115 / EHEC).